Here is a 67-residue protein sequence, read N- to C-terminus: Small ribosomal subunit protein eS17 (67 aa).

Belongs to the eukaryotic ribosomal protein eS17 family.

The polypeptide is Small ribosomal subunit protein eS17 (Pyrococcus abyssi (strain GE5 / Orsay)).